Here is a 327-residue protein sequence, read N- to C-terminus: Methionyl-tRNA formyltransferase (327 aa).

(6S)-5,6,7,8-tetrahydrofolate is bound at residue 121–124 (SLLP).

This sequence belongs to the Fmt family.

It carries out the reaction L-methionyl-tRNA(fMet) + (6R)-10-formyltetrahydrofolate = N-formyl-L-methionyl-tRNA(fMet) + (6S)-5,6,7,8-tetrahydrofolate + H(+). Its function is as follows. Attaches a formyl group to the free amino group of methionyl-tRNA(fMet). The formyl group appears to play a dual role in the initiator identity of N-formylmethionyl-tRNA by promoting its recognition by IF2 and preventing the misappropriation of this tRNA by the elongation apparatus. This Burkholderia ambifaria (strain ATCC BAA-244 / DSM 16087 / CCUG 44356 / LMG 19182 / AMMD) (Burkholderia cepacia (strain AMMD)) protein is Methionyl-tRNA formyltransferase.